The chain runs to 474 residues: Glutamate--tRNA ligase (474 aa).

Residues 11-21 (PSPTGFLHIGG) carry the 'HIGH' region motif. The 'KMSKS' region signature appears at 240–244 (KLSKR). Lysine 243 contacts ATP.

This sequence belongs to the class-I aminoacyl-tRNA synthetase family. Glutamate--tRNA ligase type 1 subfamily. In terms of assembly, monomer.

The protein localises to the cytoplasm. The catalysed reaction is tRNA(Glu) + L-glutamate + ATP = L-glutamyl-tRNA(Glu) + AMP + diphosphate. In terms of biological role, catalyzes the attachment of glutamate to tRNA(Glu) in a two-step reaction: glutamate is first activated by ATP to form Glu-AMP and then transferred to the acceptor end of tRNA(Glu). This chain is Glutamate--tRNA ligase, found in Nitrobacter winogradskyi (strain ATCC 25391 / DSM 10237 / CIP 104748 / NCIMB 11846 / Nb-255).